The following is a 125-amino-acid chain: Large ribosomal subunit protein bL12 (125 aa).

It belongs to the bacterial ribosomal protein bL12 family. In terms of assembly, homodimer. Part of the ribosomal stalk of the 50S ribosomal subunit. Forms a multimeric L10(L12)X complex, where L10 forms an elongated spine to which 2 to 4 L12 dimers bind in a sequential fashion. Binds GTP-bound translation factors.

Forms part of the ribosomal stalk which helps the ribosome interact with GTP-bound translation factors. Is thus essential for accurate translation. This Polaromonas sp. (strain JS666 / ATCC BAA-500) protein is Large ribosomal subunit protein bL12.